Reading from the N-terminus, the 180-residue chain is Probable RNA 2'-phosphotransferase (180 aa).

The protein belongs to the KptA/TPT1 family.

Removes the 2'-phosphate from RNA via an intermediate in which the phosphate is ADP-ribosylated by NAD followed by a presumed transesterification to release the RNA and generate ADP-ribose 1''-2''-cyclic phosphate (APPR&gt;P). May function as an ADP-ribosylase. This Thermococcus kodakarensis (strain ATCC BAA-918 / JCM 12380 / KOD1) (Pyrococcus kodakaraensis (strain KOD1)) protein is Probable RNA 2'-phosphotransferase.